The sequence spans 1115 residues: Ubiquitin C-terminal hydrolase 13 (1115 aa).

The tract at residues 1–51 (MTMMTPPPLDQQEDEEMLVPNPDLVEGPQPMEVAQTDPAATAVENPPPEDP) is disordered. Residues 53–178 (SLKFTWTIPM…NDTVLIEAEV (126 aa)) enclose the MATH domain. Residues 198-522 (VGLKNQGATC…NAYMLVYIRE (325 aa)) form the USP domain. Cys-207 acts as the Nucleophile in catalysis. The active-site Proton acceptor is His-454.

The protein belongs to the peptidase C19 family. As to quaternary structure, interacts with SIC/RON3. Interacts with RGI1 and RGI2.

It carries out the reaction Thiol-dependent hydrolysis of ester, thioester, amide, peptide and isopeptide bonds formed by the C-terminal Gly of ubiquitin (a 76-residue protein attached to proteins as an intracellular targeting signal).. Functionally, recognizes and hydrolyzes the peptide bond at the C-terminal Gly of ubiquitin. Involved in the processing of poly-ubiquitin precursors as well as that of ubiquitinated proteins. Positive regulator of root meristem development that, together with UBP12, prevents the ubiquitination and turnover of RGFR1 induced by the RGF1 hormone peptide, thus influencing PLT1 and PLT2 expression. This is Ubiquitin C-terminal hydrolase 13 from Arabidopsis thaliana (Mouse-ear cress).